The sequence spans 1368 residues: Indole-3-acetaldehyde oxidase (1368 aa).

Residues 19–108 (TSLVFAINGQ…GCSITTSDGL (90 aa)) form the 2Fe-2S ferredoxin-type domain. Residues Cys-60, Cys-65, and Cys-68 each contribute to the [2Fe-2S] cluster site. An FAD-binding PCMH-type domain is found at 246–427 (LHSRKYRWSS…LSLEIPSWHS (182 aa)).

This sequence belongs to the xanthine dehydrogenase family. In terms of assembly, aldehyde oxidases (AO) are homodimers and heterodimers of AO subunits. AO-alpha is an AAO1 homodimer; AO-beta is an AAO1-AAO2 heterodimer. [2Fe-2S] cluster is required as a cofactor. It depends on FAD as a cofactor. Mo-molybdopterin serves as cofactor. In terms of tissue distribution, predominantly expressed in roots, seedlings, mature siliques and seeds, and to lower extent in stems and rosettes. In seedlings, mostly expressed in lower part of hypocotyls and roots.

The protein localises to the cytoplasm. The enzyme catalyses indole-3-acetaldehyde + O2 + H2O = (indol-3-yl)acetate + H2O2 + H(+). With respect to regulation, strongly inhibited by iodoacetate and potassium cyanide (KCN). Weakly inhibited by 2-mercaptoethanol, dithiothreitol (DTT), menadione, estradiol, 4'-(9-acridinylamino)methanesulfon-m-anisidine (mAMSA), allopurinol and tritonX-100. Not affected by p-chloromercuribenzoate. In higher plants aldehyde oxidases (AO) appear to be homo- and heterodimeric assemblies of AO subunits with probably different physiological functions. AO-alpha may be involved in the biosynthesis of auxin, and in biosynthesis of abscisic acid (ABA) in seeds. In vitro, AO-alpha uses heptaldehyde, protocatechualdehyde, benzaldehyde, indole-3-aldehyde (IAld), indole-3-acetaldehyde (IAAld), cinnamaldehyde and citral as substrates; AO-beta uses IAAld, IAld and naphtaldehyde as substrates. This is Indole-3-acetaldehyde oxidase (AAO1) from Arabidopsis thaliana (Mouse-ear cress).